Consider the following 505-residue polypeptide: MAKFQGYLELDRFWKHDFLYPLIFREYIYAFAHDRGLNKSSLLENVGYDNKSSLLIVKRLITRMYQQNHLILVAHDSNQNNVFWSNKNLYSQLISEGFAVIVEIPFSIRLVSSLKGTEIVKYSNLRSIHSIFPFLEDKFPYLNSVSDVLIPYPIHLEILVQILRYWVKDASSLHLLRLFLHDYYNWNSLIISNKSISIFFKSNSRFFLFLYNSHVCEYESILLFIRNQSCHLRLTSSGSFFERIYFYEKIKHPIEEVFSNDFPAIPLFFQDPFMHYVRYQGKSILVSKDTPLLMNKWKYYLVHLWQCHFYVWSEPGRIHINQLSKHSLFFLGYLSSMRLNLSVVRSQMLENSFLMDNAMKKIDTLVPISPLIGSLAKMKFCNALGHPISKSTWADSSDLDIIDRFVRIWRNLFHYYSGSSKKKSLYRIKYILRVSCVKTLARKHKSTVRAFLKRLGSELLEEFFMEEEEVLSFIFPRTYYTLRRLYRGRIWYLDIFCINDFVNHE.

This sequence belongs to the intron maturase 2 family. MatK subfamily.

Its subcellular location is the plastid. The protein localises to the chloroplast. Its function is as follows. Usually encoded in the trnK tRNA gene intron. Probably assists in splicing its own and other chloroplast group II introns. In Ulmus parvifolia (Chinese elm), this protein is Maturase K.